A 173-amino-acid chain; its full sequence is Shikimate kinase (173 aa).

Residue 16–21 coordinates ATP; that stretch reads GSGKTT. T20 is a Mg(2+) binding site. Substrate-binding residues include D38, R62, and G83. Residue R120 coordinates ATP. R139 serves as a coordination point for substrate. ATP is bound at residue R156.

It belongs to the shikimate kinase family. In terms of assembly, monomer. Requires Mg(2+) as cofactor.

The protein resides in the cytoplasm. The catalysed reaction is shikimate + ATP = 3-phosphoshikimate + ADP + H(+). It functions in the pathway metabolic intermediate biosynthesis; chorismate biosynthesis; chorismate from D-erythrose 4-phosphate and phosphoenolpyruvate: step 5/7. In terms of biological role, catalyzes the specific phosphorylation of the 3-hydroxyl group of shikimic acid using ATP as a cosubstrate. This chain is Shikimate kinase, found in Corynebacterium diphtheriae (strain ATCC 700971 / NCTC 13129 / Biotype gravis).